Reading from the N-terminus, the 249-residue chain is Isoprenyl transferase (249 aa).

Aspartate 29 is a catalytic residue. Aspartate 29 serves as a coordination point for Mg(2+). Substrate contacts are provided by residues 30–33, tryptophan 34, arginine 42, histidine 46, and 74–76; these read GNGR and STE. The Proton acceptor role is filled by asparagine 77. Substrate contacts are provided by residues tryptophan 78, arginine 80, arginine 197, and 203–205; that span reads RLS. Glutamate 216 is a Mg(2+) binding site.

It belongs to the UPP synthase family. In terms of assembly, homodimer. Mg(2+) is required as a cofactor.

In terms of biological role, catalyzes the condensation of isopentenyl diphosphate (IPP) with allylic pyrophosphates generating different type of terpenoids. In Gloeobacter violaceus (strain ATCC 29082 / PCC 7421), this protein is Isoprenyl transferase.